Here is a 217-residue protein sequence, read N- to C-terminus: Large ribosomal subunit protein uL3 (217 aa).

The disordered stretch occupies residues 137–160; sequence VSASHGSHRNHRKPGSIGASSTPS.

This sequence belongs to the universal ribosomal protein uL3 family. As to quaternary structure, part of the 50S ribosomal subunit. Forms a cluster with proteins L14 and L19.

One of the primary rRNA binding proteins, it binds directly near the 3'-end of the 23S rRNA, where it nucleates assembly of the 50S subunit. The chain is Large ribosomal subunit protein uL3 from Clavibacter sepedonicus (Clavibacter michiganensis subsp. sepedonicus).